The sequence spans 371 residues: Deoxyhypusine synthase (371 aa).

Residues 112-116 (SNLVT), 138-140 (SAG), glutamate 144, and aspartate 245 contribute to the NAD(+) site. Position 143-144 (143-144 (EE)) interacts with spermidine. Residue aspartate 250 participates in spermidine binding. An NAD(+)-binding site is contributed by glycine 291. Histidine 296 is a binding site for spermidine. NAD(+) is bound at residue 316 to 317 (TG). Residues 322–324 (GSD) and 331–337 (EAVSWGK) contribute to the spermidine site. Residue lysine 337 is the Nucleophile of the active site. Position 350–351 (350–351 (EA)) interacts with NAD(+).

Belongs to the deoxyhypusine synthase family. The cofactor is NAD(+).

It carries out the reaction [eIF5A protein]-L-lysine + spermidine = [eIF5A protein]-deoxyhypusine + propane-1,3-diamine. It participates in protein modification; eIF5A hypusination. Its function is as follows. Catalyzes the NAD-dependent oxidative cleavage of spermidine and the subsequent transfer of the butylamine moiety of spermidine to the epsilon-amino group of a critical lysine residue of the eIF-5A precursor protein to form the intermediate deoxyhypusine residue. This is the first step of the post-translational modification of that lysine into an unusual amino acid residue named hypusine. Hypusination is unique to mature eIF-5A factor and is essential for its function. The chain is Deoxyhypusine synthase from Caenorhabditis elegans.